Reading from the N-terminus, the 155-residue chain is MAKSKPKDNALAQNRKARHDYNILETYEAGIALTGTEIKSVRASRINLKDGFAQVKNGEVWLMNVHISLYDQGNIFNHDPLRNRKLLLHKKEIKHLSEETQKKGITIVPLKVYIKNGFAKVLIGIAQGKHVYDKRETIKRRDQEREIRRTLKNYG.

It belongs to the SmpB family.

The protein localises to the cytoplasm. Functionally, required for rescue of stalled ribosomes mediated by trans-translation. Binds to transfer-messenger RNA (tmRNA), required for stable association of tmRNA with ribosomes. tmRNA and SmpB together mimic tRNA shape, replacing the anticodon stem-loop with SmpB. tmRNA is encoded by the ssrA gene; the 2 termini fold to resemble tRNA(Ala) and it encodes a 'tag peptide', a short internal open reading frame. During trans-translation Ala-aminoacylated tmRNA acts like a tRNA, entering the A-site of stalled ribosomes, displacing the stalled mRNA. The ribosome then switches to translate the ORF on the tmRNA; the nascent peptide is terminated with the 'tag peptide' encoded by the tmRNA and targeted for degradation. The ribosome is freed to recommence translation, which seems to be the essential function of trans-translation. The polypeptide is SsrA-binding protein (Ligilactobacillus salivarius (strain UCC118) (Lactobacillus salivarius)).